The primary structure comprises 427 residues: Sperm-associated antigen 1A (427 aa).

Positions Gln-46–Asn-113 are disordered. TPR repeat units lie at residues Leu-125 to Ala-158, Cys-167 to Ser-200, Lys-202 to Val-234, Phe-302 to Glu-335, Cys-336 to Asn-369, and Lys-371 to Val-403.

It is found in the cytoplasm. The protein localises to the dynein axonemal particle. In terms of biological role, may play a role in the cytoplasmic assembly and/or trafficking of the axonemal dynein arms. This is Sperm-associated antigen 1A (spag1a) from Danio rerio (Zebrafish).